We begin with the raw amino-acid sequence, 261 residues long: Thioesterase TesA (261 aa).

Residues 1 to 24 are disordered; it reads MLARHGPRYGGSVNGHSDDSSGDA. Catalysis depends on residues serine 104, aspartate 208, and histidine 236.

It belongs to the thioesterase family.

It carries out the reaction a fatty acyl-CoA + H2O = a fatty acid + CoA + H(+). In terms of biological role, involved in the synthesis of both phthiocerol dimycocerosates (PDIMs) and phenolic glycolipids (PGLs), which are structurally related lipids non-covalently bound to the outer cell wall layer of M.tuberculosis and are important virulence factors. This is Thioesterase TesA (tesA) from Mycobacterium bovis (strain ATCC BAA-935 / AF2122/97).